A 374-amino-acid polypeptide reads, in one-letter code: uncharacterized protein (374 aa).

29–36 (GSLNSGKS) is an ATP binding site.

It belongs to the archaeal ATPase family.

This is an uncharacterized protein from Methanocaldococcus jannaschii (strain ATCC 43067 / DSM 2661 / JAL-1 / JCM 10045 / NBRC 100440) (Methanococcus jannaschii).